The chain runs to 345 residues: MSKKIVTLAGDGIGPEIMSAGLSVLKAVSKKIDFEYELEAKDFGGIAIDKHGHPLPEETLQAVKNADAILLAAIGHPKYNNAKVRPEQGLLALRKELGLYANVRPLKIYPALKKLSPIRNVENVDFLVIRELTGGIYFGQHELADDKARDVNDYSADEIRRILHFAFKSAQSRPRKLLTSVDKQNVLATSKLWRKMADEIADEYPDVRLEHQLVDSCAMLLITNPQQFDVIVTENLFGDILSDEASSLAGSLGVMPSSSHGFNGLALYEPIHGSAPDIAGKGIANPVSMILSIAMMLRESFGQEDGAAMIEKAVTQTFTDGILTKDLGGTATTKEMTEAILKNCQ.

Substrate-binding residues include Arg94, Arg104, Arg130, and Asp215. Mg(2+) contacts are provided by Asp215, Asp239, and Asp243. 273 to 285 contacts NAD(+); the sequence is GSAPDIAGKGIAN.

Belongs to the isocitrate and isopropylmalate dehydrogenases family. LeuB type 1 subfamily. In terms of assembly, homodimer. The cofactor is Mg(2+). Requires Mn(2+) as cofactor.

It localises to the cytoplasm. It carries out the reaction (2R,3S)-3-isopropylmalate + NAD(+) = 4-methyl-2-oxopentanoate + CO2 + NADH. It functions in the pathway amino-acid biosynthesis; L-leucine biosynthesis; L-leucine from 3-methyl-2-oxobutanoate: step 3/4. Functionally, catalyzes the oxidation of 3-carboxy-2-hydroxy-4-methylpentanoate (3-isopropylmalate) to 3-carboxy-4-methyl-2-oxopentanoate. The product decarboxylates to 4-methyl-2 oxopentanoate. This Lactococcus lactis subsp. lactis (strain IL1403) (Streptococcus lactis) protein is 3-isopropylmalate dehydrogenase (leuB).